We begin with the raw amino-acid sequence, 272 residues long: Orotidine 5'-phosphate decarboxylase (272 aa).

Catalysis depends on Lys95, which acts as the Proton donor.

The protein belongs to the OMP decarboxylase family. Type 2 subfamily.

The catalysed reaction is orotidine 5'-phosphate + H(+) = UMP + CO2. It functions in the pathway pyrimidine metabolism; UMP biosynthesis via de novo pathway; UMP from orotate: step 2/2. This chain is Orotidine 5'-phosphate decarboxylase, found in Cupriavidus necator (strain ATCC 17699 / DSM 428 / KCTC 22496 / NCIMB 10442 / H16 / Stanier 337) (Ralstonia eutropha).